Reading from the N-terminus, the 151-residue chain is Transcription elongation factor Spt5 (151 aa).

One can recognise a KOW domain in the interval 98-128 (PGQVVEIVAGAFKGMKARVIDVNQSKGQVTV).

Belongs to the archaeal Spt5 family. Heterodimer composed of Spt4 and Spt5. Interacts with RNA polymerase (RNAP).

In terms of biological role, stimulates transcription elongation. This chain is Transcription elongation factor Spt5, found in Aeropyrum pernix (strain ATCC 700893 / DSM 11879 / JCM 9820 / NBRC 100138 / K1).